A 55-amino-acid chain; its full sequence is Large ribosomal subunit protein bL33 (55 aa).

It belongs to the bacterial ribosomal protein bL33 family.

This chain is Large ribosomal subunit protein bL33, found in Yersinia enterocolitica serotype O:8 / biotype 1B (strain NCTC 13174 / 8081).